Here is a 458-residue protein sequence, read N- to C-terminus: Cysteine protease ATG4C (458 aa).

M1 is subject to N-acetylmethionine. C111 functions as the Nucleophile in the catalytic mechanism. Catalysis depends on residues D345 and H347. S451 is subject to Phosphoserine. T452 carries the post-translational modification Phosphothreonine.

Belongs to the peptidase C54 family.

The protein resides in the cytoplasm. The enzyme catalyses [protein]-C-terminal L-amino acid-glycyl-phosphatidylethanolamide + H2O = [protein]-C-terminal L-amino acid-glycine + a 1,2-diacyl-sn-glycero-3-phosphoethanolamine. Its activity is regulated as follows. Inhibited by N-ethylmaleimide. Cysteine protease that plays a key role in autophagy by mediating both proteolytic activation and delipidation of ATG8 family proteins. The protease activity is required for proteolytic activation of ATG8 family proteins: cleaves the C-terminal amino acid of ATG8 proteins MAP1LC3 and GABARAPL2, to reveal a C-terminal glycine. Exposure of the glycine at the C-terminus is essential for ATG8 proteins conjugation to phosphatidylethanolamine (PE) and insertion to membranes, which is necessary for autophagy. In addition to the protease activity, also mediates delipidation of ATG8 family proteins. Catalyzes delipidation of PE-conjugated forms of ATG8 proteins during macroautophagy. Compared to ATG4B, the major protein for proteolytic activation of ATG8 proteins, shows weaker ability to cleave the C-terminal amino acid of ATG8 proteins, while it displays stronger delipidation activity. In contrast to other members of the family, weakly or not involved in phagophore growth during mitophagy. The sequence is that of Cysteine protease ATG4C from Homo sapiens (Human).